Reading from the N-terminus, the 467-residue chain is ATP synthase subunit beta (467 aa).

156–163 (GGAGVGKT) is a binding site for ATP.

Belongs to the ATPase alpha/beta chains family. In terms of assembly, F-type ATPases have 2 components, CF(1) - the catalytic core - and CF(0) - the membrane proton channel. CF(1) has five subunits: alpha(3), beta(3), gamma(1), delta(1), epsilon(1). CF(0) has three main subunits: a(1), b(2) and c(9-12). The alpha and beta chains form an alternating ring which encloses part of the gamma chain. CF(1) is attached to CF(0) by a central stalk formed by the gamma and epsilon chains, while a peripheral stalk is formed by the delta and b chains.

Its subcellular location is the cell inner membrane. It catalyses the reaction ATP + H2O + 4 H(+)(in) = ADP + phosphate + 5 H(+)(out). Produces ATP from ADP in the presence of a proton gradient across the membrane. The catalytic sites are hosted primarily by the beta subunits. The chain is ATP synthase subunit beta from Cupriavidus pinatubonensis (strain JMP 134 / LMG 1197) (Cupriavidus necator (strain JMP 134)).